The following is a 528-amino-acid chain: Chromosomal replication initiator protein DnaA (528 aa).

The domain I, interacts with DnaA modulators stretch occupies residues 1-104; that stretch reads MNDDPNALAR…PVDDEPESEA (104 aa). A disordered region spans residues 93–159; sequence AAPVDDEPES…DFEEVDDDSE (67 aa). Over residues 104–123 the composition is skewed to basic and acidic residues; sequence APSRERRPDPEPVHTPRHLE. A domain II region spans residues 105-187; sequence PSRERRPDPE…GPAPAATGGN (83 aa). The span at 149-159 shows a compositional bias: acidic residues; the sequence is TDFEEVDDDSE. Positions 188–404 are domain III, AAA+ region; sequence SLNAKYTFDT…GALIRVTAFA (217 aa). ATP is bound by residues Gly-232, Gly-234, Lys-235, and Thr-236. The domain IV, binds dsDNA stretch occupies residues 405–528; the sequence is SLNRQPLDLT…TARIKQRSKR (124 aa).

This sequence belongs to the DnaA family. Oligomerizes as a right-handed, spiral filament on DNA at oriC.

It localises to the cytoplasm. Plays an essential role in the initiation and regulation of chromosomal replication. ATP-DnaA binds to the origin of replication (oriC) to initiate formation of the DNA replication initiation complex once per cell cycle. Binds the DnaA box (a 9 base pair repeat at the origin) and separates the double-stranded (ds)DNA. Forms a right-handed helical filament on oriC DNA; dsDNA binds to the exterior of the filament while single-stranded (ss)DNA is stabiized in the filament's interior. The ATP-DnaA-oriC complex binds and stabilizes one strand of the AT-rich DNA unwinding element (DUE), permitting loading of DNA polymerase. After initiation quickly degrades to an ADP-DnaA complex that is not apt for DNA replication. Binds acidic phospholipids. This is Chromosomal replication initiator protein DnaA from Rhodococcus opacus (strain B4).